The chain runs to 557 residues: 2-succinyl-5-enolpyruvyl-6-hydroxy-3-cyclohexene-1-carboxylate synthase (557 aa).

This sequence belongs to the TPP enzyme family. MenD subfamily. Homodimer. Requires Mg(2+) as cofactor. Mn(2+) serves as cofactor. It depends on thiamine diphosphate as a cofactor.

It catalyses the reaction isochorismate + 2-oxoglutarate + H(+) = 5-enolpyruvoyl-6-hydroxy-2-succinyl-cyclohex-3-ene-1-carboxylate + CO2. It participates in quinol/quinone metabolism; 1,4-dihydroxy-2-naphthoate biosynthesis; 1,4-dihydroxy-2-naphthoate from chorismate: step 2/7. It functions in the pathway quinol/quinone metabolism; menaquinone biosynthesis. Its function is as follows. Catalyzes the thiamine diphosphate-dependent decarboxylation of 2-oxoglutarate and the subsequent addition of the resulting succinic semialdehyde-thiamine pyrophosphate anion to isochorismate to yield 2-succinyl-5-enolpyruvyl-6-hydroxy-3-cyclohexene-1-carboxylate (SEPHCHC). The protein is 2-succinyl-5-enolpyruvyl-6-hydroxy-3-cyclohexene-1-carboxylate synthase of Phocaeicola vulgatus (strain ATCC 8482 / DSM 1447 / JCM 5826 / CCUG 4940 / NBRC 14291 / NCTC 11154) (Bacteroides vulgatus).